We begin with the raw amino-acid sequence, 664 residues long: MASQFCLPLAPRLSPLKPLKSHFTDFQVGICVAIQRSDKRIHLAVVTEINRENSWVTVEWVEKGVKKGKKIELETVLLLNPALASTEHQRSRRPLRPVSVIPATAIGDQRTATKWIAMIPHRNETPSGDSQTLVIPSNPCLMKRKKSPCLREIEKLQKQREKRRRLQLEIRARRALDINTGNPNFETMRMIEEYRRHLDSSKMSRLEPPEDHRICVCVRKRPLNERETTMKDLDIITIPSHNVVMVHESKQKVDLTRYLENQTFCFDHAFDDTASNELVYQFTARPLVESIFRKGMATCFAYGQTGSGKTHTMGGAFSGKAQECSKGIYALVAQDVFLLLRTPAYEKLELKVYGTFFEIYGGKVYDLLNWKKKLQVLEDGNQQIQVVGLQEQEVGCVEEVLNLVELGNSCRTSGQTSVNAHSSRSHAVFQLILKCGGKLHGKFSLVDLAGNERGADTAKATRKRQLEGAEINKSLLALKECIRALGKNKSHTPFRASKLTQVLRDSFIGQNSYTCMIATISPGMTSCENTLNTLRYANRVKELALEARPYPPTDHEMPLTLENGNTNSEKSLQKDDIIQIPTVQKEEEKESDELTSTKEPAASWSRSGPWWEAIQETAEGVNCDVDFCIAQSLSILEQKIGVLTEIQKKLQLLRDDLQKKSQAE.

Threonine 125 is modified (phosphothreonine; by PLK1). Residues 149-177 (CLREIEKLQKQREKRRRLQLEIRARRALD) are a coiled coil. Serine 204 is modified (phosphoserine; by PLK1). The Kinesin motor domain occupies 213–543 (RICVCVRKRP…LRYANRVKEL (331 aa)). 303-310 (GQTGSGKT) lines the ATP pocket. Residues 583 to 607 (VQKEEEKESDELTSTKEPAASWSRS) form a disordered region. A coiled-coil region spans residues 642 to 663 (VLTEIQKKLQLLRDDLQKKSQA).

Belongs to the TRAFAC class myosin-kinesin ATPase superfamily. Kinesin family. MCAK/KIF2 subfamily. Post-translationally, phosphorylation at Thr-125 by PLK1 is required for activity in the correction of kinetochore-microtubules attachment errors, while phosphorylation at Ser-204 also by PLK1 is required for the kinetochore localization and activity in prometaphase.

Its subcellular location is the cytoplasm. It localises to the cytoskeleton. The protein localises to the microtubule organizing center. The protein resides in the centrosome. It is found in the spindle. Its subcellular location is the chromosome. It localises to the centromere. The protein localises to the kinetochore. Plus end-directed microtubule-dependent motor required for spindle assembly and chromosome movement. Has microtubule depolymerization activity. Plays a role in chromosome congression. The protein is Kinesin-like protein KIF2B of Rattus norvegicus (Rat).